The primary structure comprises 499 residues: Bifunctional purine biosynthesis protein PurH (499 aa).

In terms of domain architecture, MGS-like spans 1–144 (MIKRALISVF…KNFKDVVVLT (144 aa)).

The protein belongs to the PurH family.

The catalysed reaction is (6R)-10-formyltetrahydrofolate + 5-amino-1-(5-phospho-beta-D-ribosyl)imidazole-4-carboxamide = 5-formamido-1-(5-phospho-D-ribosyl)imidazole-4-carboxamide + (6S)-5,6,7,8-tetrahydrofolate. It catalyses the reaction IMP + H2O = 5-formamido-1-(5-phospho-D-ribosyl)imidazole-4-carboxamide. Its pathway is purine metabolism; IMP biosynthesis via de novo pathway; 5-formamido-1-(5-phospho-D-ribosyl)imidazole-4-carboxamide from 5-amino-1-(5-phospho-D-ribosyl)imidazole-4-carboxamide (10-formyl THF route): step 1/1. The protein operates within purine metabolism; IMP biosynthesis via de novo pathway; IMP from 5-formamido-1-(5-phospho-D-ribosyl)imidazole-4-carboxamide: step 1/1. In Clostridium botulinum (strain Loch Maree / Type A3), this protein is Bifunctional purine biosynthesis protein PurH.